The primary structure comprises 477 residues: Probable ribonuclease FAU-1 (477 aa).

Belongs to the FAU-1 family.

Probable RNase involved in rRNA stability through maturation and/or degradation of precursor rRNAs. Binds to RNA in loop regions with AU-rich sequences. The sequence is that of Probable ribonuclease FAU-1 from Staphylothermus marinus (strain ATCC 43588 / DSM 3639 / JCM 9404 / F1).